We begin with the raw amino-acid sequence, 1879 residues long: Protein TIC 214 (1879 aa).

Helical transmembrane passes span 18–38 (IINSVVVVGLYYGFLTTFSIG), 64–84 (FITGQLMMFISIYYAPLHLAL), 87–107 (PYTITVLALPYLLFHFFWTNP), 124–144 (LSIQCVFLNNLIFQLFNHFIL), 172–192 (VGWLIGHILFMKSVGLILVWI), and 218–238 (IAPIFSIILFITWVYYLGRIP). 2 disordered regions span residues 245–305 (ETSK…IDET) and 586–702 (ISTS…DEPM). 2 stretches are compositionally biased toward acidic residues: residues 253-268 (AETEESEEETDVEIET) and 295-305 (EKEDPDKIDET). The span at 586-688 (ISTSTPTSTP…SIPASTSTST (103 aa)) shows a compositional bias: low complexity. Basic and acidic residues predominate over residues 691-701 (IKSKDEPKDEP).

The protein belongs to the TIC214 family. Part of the Tic complex.

Its subcellular location is the plastid. It localises to the chloroplast inner membrane. Involved in protein precursor import into chloroplasts. May be part of an intermediate translocation complex acting as a protein-conducting channel at the inner envelope. The sequence is that of Protein TIC 214 from Cucumis sativus (Cucumber).